Consider the following 137-residue polypeptide: Large ribosomal subunit protein uL16 (137 aa).

This sequence belongs to the universal ribosomal protein uL16 family. Part of the 50S ribosomal subunit.

Its function is as follows. Binds 23S rRNA and is also seen to make contacts with the A and possibly P site tRNAs. The sequence is that of Large ribosomal subunit protein uL16 from Oleidesulfovibrio alaskensis (strain ATCC BAA-1058 / DSM 17464 / G20) (Desulfovibrio alaskensis).